The sequence spans 199 residues: Pyridoxal 5'-phosphate synthase subunit PdxT (199 aa).

49 to 51 (GES) contributes to the L-glutamine binding site. C81 acts as the Nucleophile in catalysis. Residues R110 and 139–140 (IR) contribute to the L-glutamine site. Active-site charge relay system residues include H175 and E177.

It belongs to the glutaminase PdxT/SNO family. In the presence of PdxS, forms a dodecamer of heterodimers. Only shows activity in the heterodimer.

The catalysed reaction is aldehydo-D-ribose 5-phosphate + D-glyceraldehyde 3-phosphate + L-glutamine = pyridoxal 5'-phosphate + L-glutamate + phosphate + 3 H2O + H(+). It catalyses the reaction L-glutamine + H2O = L-glutamate + NH4(+). The protein operates within cofactor biosynthesis; pyridoxal 5'-phosphate biosynthesis. Functionally, catalyzes the hydrolysis of glutamine to glutamate and ammonia as part of the biosynthesis of pyridoxal 5'-phosphate. The resulting ammonia molecule is channeled to the active site of PdxS. The polypeptide is Pyridoxal 5'-phosphate synthase subunit PdxT (Frankia casuarinae (strain DSM 45818 / CECT 9043 / HFP020203 / CcI3)).